The sequence spans 348 residues: Protein RecA (348 aa).

66 to 73 (GPESSGKT) provides a ligand contact to ATP.

Belongs to the RecA family.

It is found in the cytoplasm. In terms of biological role, can catalyze the hydrolysis of ATP in the presence of single-stranded DNA, the ATP-dependent uptake of single-stranded DNA by duplex DNA, and the ATP-dependent hybridization of homologous single-stranded DNAs. It interacts with LexA causing its activation and leading to its autocatalytic cleavage. The protein is Protein RecA of Burkholderia lata (strain ATCC 17760 / DSM 23089 / LMG 22485 / NCIMB 9086 / R18194 / 383).